We begin with the raw amino-acid sequence, 263 residues long: Protein PYRICULARIA ORYZAE RESISTANCE 21 (263 aa).

In terms of domain architecture, HMA spans 1-68 (MGILVISVDL…IWCKAGKIIK (68 aa)). The a metal cation site is built by Cys12 and Cys15. Residues 126–153 (CEKPKPCEKPPPCKPEEPPKPPPEKPPP) form a disordered region. A compositionally biased stretch (basic and acidic residues) spans 139–153 (KPEEPPKPPPEKPPP).

Its function is as follows. Involved in defense responses. Contributes to slowing defense responses toward Magnaporthe oryzae. The sequence is that of Protein PYRICULARIA ORYZAE RESISTANCE 21 from Oryza sativa subsp. indica (Rice).